The chain runs to 319 residues: Acetyl esterase (319 aa).

Positions 91–93 (HGG) match the Involved in the stabilization of the negatively charged intermediate by the formation of the oxyanion hole motif. Active-site residues include Ser165, Asp262, and His292.

Belongs to the 'GDXG' lipolytic enzyme family. In terms of assembly, homodimer. Interacts with MalT and MelA.

Its subcellular location is the cytoplasm. Displays esterase activity towards short chain fatty esters (acyl chain length of up to 8 carbons). Able to hydrolyze triacetylglycerol (triacetin) and tributyrylglycerol (tributyrin), but not trioleylglycerol (triolein) or cholesterol oleate. Negatively regulates MalT activity by antagonizing maltotriose binding. Inhibits MelA galactosidase activity. This chain is Acetyl esterase, found in Escherichia coli (strain 55989 / EAEC).